A 388-amino-acid chain; its full sequence is Flap endonuclease 1 (388 aa).

The segment at 1-104 is N-domain; the sequence is MGILGLSKLI…GELAKRAERR (104 aa). Asp34 is a Mg(2+) binding site. Positions 47 and 70 each coordinate DNA. Mg(2+) contacts are provided by Asp86, Glu158, Glu160, Asp179, and Asp181. Residues 122 to 253 are I-domain; that stretch reads QIEKFNRRLV…KRAIELIKSY (132 aa). Residue Glu158 coordinates DNA. The DNA site is built by Gly231 and Asp233. Asp233 is a binding site for Mg(2+). Positions 336–344 are interaction with PCNA; that stretch reads TQVRLDSFF. Residues 355–388 are disordered; it reads AAAKRKAEESKKSANSKKAKIGGGSGAGRGRRPK.

The protein belongs to the XPG/RAD2 endonuclease family. FEN1 subfamily. Interacts with PCNA. Three molecules of FEN1 bind to one PCNA trimer with each molecule binding to one PCNA monomer. PCNA stimulates the nuclease activity without altering cleavage specificity. Mg(2+) is required as a cofactor. Phosphorylated. Phosphorylation upon DNA damage induces relocalization to the nuclear plasma.

Its subcellular location is the nucleus. It localises to the nucleolus. The protein resides in the nucleoplasm. It is found in the mitochondrion. Functionally, structure-specific nuclease with 5'-flap endonuclease and 5'-3' exonuclease activities involved in DNA replication and repair. During DNA replication, cleaves the 5'-overhanging flap structure that is generated by displacement synthesis when DNA polymerase encounters the 5'-end of a downstream Okazaki fragment. It enters the flap from the 5'-end and then tracks to cleave the flap base, leaving a nick for ligation. Also involved in the long patch base excision repair (LP-BER) pathway, by cleaving within the apurinic/apyrimidinic (AP) site-terminated flap. Acts as a genome stabilization factor that prevents flaps from equilibrating into structures that lead to duplications and deletions. Also possesses 5'-3' exonuclease activity on nicked or gapped double-stranded DNA, and exhibits RNase H activity. Also involved in replication and repair of rDNA and in repairing mitochondrial DNA. This is Flap endonuclease 1 from Drosophila grimshawi (Hawaiian fruit fly).